We begin with the raw amino-acid sequence, 306 residues long: Putative transcriptional regulator (306 aa).

Residues 1–61 (MIKRNLNDLL…TRTTRSVSPT (61 aa)) enclose the HTH lysR-type domain. The segment at residues 21–40 (FTRAAAQLGVTQSALSQSIS) is a DNA-binding region (H-T-H motif).

This sequence belongs to the LysR transcriptional regulatory family.

May have a role in the regulation of oprD expression. The protein is Putative transcriptional regulator of Pseudomonas aeruginosa (strain ATCC 15692 / DSM 22644 / CIP 104116 / JCM 14847 / LMG 12228 / 1C / PRS 101 / PAO1).